Reading from the N-terminus, the 153-residue chain is UPF0178 protein MXAN_5526 (153 aa).

It belongs to the UPF0178 family.

The polypeptide is UPF0178 protein MXAN_5526 (Myxococcus xanthus (strain DK1622)).